Here is a 402-residue protein sequence, read N- to C-terminus: Probable tRNA pseudouridine synthase tag-124 (402 aa).

The Nucleophile role is filled by D85. The disordered stretch occupies residues 383 to 402; that stretch reads SKKEKMAEKKKNGEESSDKL.

This sequence belongs to the tRNA pseudouridine synthase TruA family.

It carries out the reaction a uridine in tRNA = a pseudouridine in tRNA. Functionally, formation of pseudouridine at position 38 and 39 in the anticodon stem and loop of transfer RNAs. This is Probable tRNA pseudouridine synthase tag-124 (tag-124) from Caenorhabditis elegans.